The following is a 211-amino-acid chain: Pyridoxine/pyridoxamine 5'-phosphate oxidase (211 aa).

Residues 7–10 (RRDY) and K65 contribute to the substrate site. Residues 60 to 65 (RIVLLK), 75 to 76 (YT), R81, K82, and Q104 each bind FMN. Residues Y122, R126, and S130 each contribute to the substrate site. FMN contacts are provided by residues 139-140 (QS) and W184. 190–192 (RLH) is a substrate binding site. Residue R194 coordinates FMN.

It belongs to the pyridoxamine 5'-phosphate oxidase family. As to quaternary structure, homodimer. The cofactor is FMN.

The catalysed reaction is pyridoxamine 5'-phosphate + O2 + H2O = pyridoxal 5'-phosphate + H2O2 + NH4(+). The enzyme catalyses pyridoxine 5'-phosphate + O2 = pyridoxal 5'-phosphate + H2O2. It functions in the pathway cofactor metabolism; pyridoxal 5'-phosphate salvage; pyridoxal 5'-phosphate from pyridoxamine 5'-phosphate: step 1/1. The protein operates within cofactor metabolism; pyridoxal 5'-phosphate salvage; pyridoxal 5'-phosphate from pyridoxine 5'-phosphate: step 1/1. In terms of biological role, catalyzes the oxidation of either pyridoxine 5'-phosphate (PNP) or pyridoxamine 5'-phosphate (PMP) into pyridoxal 5'-phosphate (PLP). This is Pyridoxine/pyridoxamine 5'-phosphate oxidase from Aliivibrio salmonicida (strain LFI1238) (Vibrio salmonicida (strain LFI1238)).